The chain runs to 362 residues: MATSQTKELPRPQLFTVMTRYIPGLVLTGVITGLALNVGDMPWFINMGLGALTLAILFGIIVGNTLYPWLQPVCSDGVVYAKQYLLRLGIILYGFRLTFQQVADVGATGMVIDLLTLSSTFILACWLGKRVFGLDQQTVMLIGAGSSICGAAAIMATEPVLKADASKVAVAVATVVIFGTLAIFVYPWLYQLNLHYQWLPFSQETFGIFAGSTIHEVAQVVAAGHAIGPDAENAAVITKMIRVMMLAPFLLLLSAYLGRSRIKTSGEKREKSAITIPWFAVIFILMAGFNSLNLLPAVWVNHLITLDTILLAMAMAALGLTTHIGSIRQAGVKPLLLALLLFIWLLVGGTGINLFVQHIALV.

Transmembrane regions (helical) follow at residues 21–38 (YIPG…ALNV), 48–70 (GLGA…YPWL), 102–124 (VADV…FILA), 139–161 (VMLI…EPVL), 168–190 (VAVA…PWLY), 240–257 (MIRV…SAYL), 278–300 (WFAV…AVWV), 305–327 (TLDT…IGSI), and 334–356 (PLLL…NLFV).

Belongs to the UPF0324 family.

The protein localises to the cell membrane. In Yersinia pestis, this protein is UPF0324 membrane protein YPO1307/y2878/YP_1285.